Here is a 339-residue protein sequence, read N- to C-terminus: DNA-directed RNA polymerase RPB7 homolog (339 aa).

This sequence belongs to the Asfivirus DNA-directed RNA polymerase RPB7 homolog family. As to quaternary structure, part of the viral DNA-directed RNA polymerase that consists of 8 polII-like subunits (RPB1, RPB2, RPB3, RPB5, RPB6, RPB7, RPB9, RPB10), a capping enzyme and a termination factor.

The protein localises to the host cytoplasm. The protein resides in the virion. In terms of biological role, component of the DNA-directed RNA polymerase (RNAP) that catalyzes the transcription in the cytoplasm of viral DNA into RNA using the four ribonucleoside triphosphates as substrates. This is DNA-directed RNA polymerase RPB7 homolog from African swine fever virus (strain Badajoz 1971 Vero-adapted) (Ba71V).